The chain runs to 1506 residues: Transient receptor potential cation channel subfamily M member 2 (1506 aa).

Residues methionine 1 to serine 11 are compositionally biased toward basic and acidic residues. Positions methionine 1–arginine 22 are disordered. Over methionine 1 to glycine 750 the chain is Cytoplasmic. Positions 173, 178, 301, 332, and 335 each coordinate ADP-D-ribose. Residue threonine 738 is modified to Phosphothreonine. The stretch at leucine 751–glycine 767 is an intramembrane region. Topologically, residues phenylalanine 768–proline 792 are cytoplasmic. A helical membrane pass occupies residues valine 793 to valine 813. The Extracellular portion of the chain corresponds to leucine 814–tryptophan 824. Residues cysteine 825–phenylalanine 845 traverse the membrane as a helical segment. Residues glutamate 840 and glutamine 843 each coordinate Ca(2+). Residues tyrosine 846–phenylalanine 864 lie on the Cytoplasmic side of the membrane. The helical transmembrane segment at tryptophan 865–isoleucine 885 threads the bilayer. Asparagine 866 contributes to the Ca(2+) binding site. The Extracellular portion of the chain corresponds to proline 886 to arginine 893. Residues isoleucine 894 to serine 914 traverse the membrane as a helical segment. Topologically, residues lysine 915 to arginine 926 are cytoplasmic. A helical transmembrane segment spans residues methionine 927–valine 947. Topologically, residues alanine 948–valine 967 are extracellular. The segment at residues valine 968–tyrosine 982 is an intramembrane region (pore-forming). A Selectivity filter motif is present at residues phenylalanine 976–isoleucine 979. Over isoleucine 983–glutamate 1019 the chain is Extracellular. Cysteines 993 and 1005 form a disulfide. A helical transmembrane segment spans residues tryptophan 1020 to leucine 1041. Over isoleucine 1042–proline 1076 the chain is Cytoplasmic. Glutamate 1070 lines the Ca(2+) pocket. Residues alanine 1077–valine 1095 lie within the membrane without spanning it. Residues leucine 1096–phenylalanine 1506 are Cytoplasmic-facing. In terms of domain architecture, Nudix hydrolase spans arginine 1350 to leucine 1501. Serine 1378 contributes to the ADP-D-ribose binding site. Residues glycine 1386 to tryptophan 1407 carry the Nudix box motif. The ADP-D-ribose site is built by aspartate 1427, arginine 1429, tyrosine 1488, and asparagine 1490.

This sequence belongs to the transient receptor (TC 1.A.4) family. LTrpC subfamily. TRPM2 sub-subfamily. Homotetramer. Protein kinase C (PKC)-mediated phosphorylation of TRPM2 at Thr-738 counteracts the effect of cytosolic Ca(2+) and elevates the temperature threshold. Detected in the preoptic area of the hypothalamus, a brain area involved in body temperature control. Detected in beta-cells in pancreas islets (at protein level). Detected in brain cortex, striatum, hippocampus CA1, CA2 and CA3 layers, and in the Purkinje cell layer in cerebellum. Widely expressed, with highest levels in lung, spleen, eye and brain. Detected in dendritic cells and in polymorphonuclear neutrophils.

Its subcellular location is the cell membrane. It is found in the perikaryon. The protein localises to the cell projection. The protein resides in the cytoplasmic vesicle. It localises to the lysosome. The enzyme catalyses Ca(2+)(in) = Ca(2+)(out). The catalysed reaction is Na(+)(in) = Na(+)(out). Its activity is regulated as follows. Activated by intracellular ADP-ribose, beta-NAD (NAD(+)) and similar compounds, and by oxidative stress caused by reactive oxygen or nitrogen species. Ca(2+) and PI(4,5)P2 are required for channel opening by ADP-ribose. Activated by moderate heat (35 to 40 degrees Celsius). Activation by ADP-ribose and beta-NAD is strongly increased by moderate heat (35 to 40 degrees Celsius). Likewise, reactive oxygen species lower the threshold for activation by moderate heat (37 degrees Celsius). Inactivated by exposure to extracellular pH between 4.0 and 6.5; irreversibly inactivated when open channels are exposed to extracellular pH between 4.0 and 6.5, while pre-exposure of closed channels to extracellular pH 5.5 gives rise to currents that rapidly inactivate, but protects against irreversible inactivation. Inactivated by intracellular ATP. Activated by arachidonic acid. Inhibited by 2-aminoethyl diphenylborinate (2-APB). In terms of biological role, nonselective, voltage-independent cation channel that mediates Na(+) and Ca(2+) influx, leading to increased cytoplasmic Ca(2+) levels. Functions as a ligand-gated ion channel, gated by intracellular adenosine diphosphate ribose (ADP-ribose), Ca(2+), warm temperature, and oxidative stress. The precise physiological activators are under debate; the true, physiological activators may be ADP-ribose and ADP-ribose-2'-phosphate. Binding of ADP-ribose to the cytoplasmic Nudix domain causes a conformation change; the channel is primed but still requires Ca(2+) binding to trigger channel opening. Extracellular Ca(2+) passes through the channel and increases channel activity. Also contributes to Ca(2+) release from intracellular stores in response to ADP-ribose. Plays a role in numerous processes that involve signaling via intracellular Ca(2+) levels. Besides, mediates the release of lysosomal Zn(2+) stores in response to reactive oxygen species, leading to increased cytosolic Zn(2+) levels. Plays a role in mediating behavorial and physiological responses to moderate heat and thereby contributes to body temperature homeostasis. Plays a role in insulin secretion, a process that requires increased cytoplasmic Ca(2+) levels. Required for normal IFNG and cytokine secretion and normal innate immune immunity in response to bacterial infection. Required for normal phagocytosis and cytokine release by macrophages exposed to zymosan (in vitro). Plays a role in dendritic cell differentiation and maturation, and in dendritic cell chemotaxis via its role in regulating cytoplasmic Ca(2+) levels. Plays a role in the regulation of the reorganization of the actin cytoskeleton and filopodia formation in response to reactive oxygen species via its function in increasing cytoplasmic Ca(2+) and Zn(2+) levels. Confers susceptibility to cell death following oxidative stress. This Mus musculus (Mouse) protein is Transient receptor potential cation channel subfamily M member 2 (Trpm2).